The following is a 5900-amino-acid chain: Midasin (5900 aa).

The tract at residues 250–270 (GSSVKSKKGGEQQQEGEGEDE) is disordered. AAA-ATPase protomer stretches follow at residues 278–583 (TNTV…LRKQ), 673–1012 (EKIS…ALNY), 1101–1346 (PIIP…IAGY), 1411–1721 (IVWT…MDKQ), 1840–2089 (RGMQ…HVLT), and 2167–2451 (LENI…EIYM). ATP-binding positions include 302–309 (GVTGSGKT) and 689–696 (GETGTGKT). A disordered region spans residues 796–826 (QTTTNNTKENNNNNNNNNNNNNNNNNNKKRT). Over residues 797–821 (TTTNNTKENNNNNNNNNNNNNNNNN) the composition is skewed to low complexity. ATP contacts are provided by residues 1135-1142 (GPTSSGKT), 1438-1445 (GETGCSKT), 1852-1859 (GSPGVGKT), and 2184-2191 (GPTSTSKT). Positions 2562–4965 (ESAIKSILCE…EGKGKKDVSD (2404 aa)) are linker. The interval 4932 to 5598 (GDDGEGGEGG…SVEEKKLTRE (667 aa)) is disordered. The segment covering 4984-5008 (KDEDEDEEKEEKDEDEGFDMQDDFE) has biased composition (acidic residues). The span at 5009–5055 (GEMHDIKKDENKDEDKKDDPNNEKENDKEMGDLEKPEDNVVDEKLWD) shows a compositional bias: basic and acidic residues. Positions 5056 to 5076 (EQDVQDEEEQDEEGKGDETNS) are enriched in acidic residues. Basic and acidic residues predominate over residues 5079–5113 (MMAKQDGKDDNDDDKKDDDKKDDKKKKKEENGKPD). Acidic residues-rich tracts occupy residues 5114–5130 (ENEEGEEGKDDEEEDGK) and 5139–5156 (GASDEDDFGQEENEDDVI). Over residues 5159–5173 (EQEKEENHGDPRGDD) the composition is skewed to basic and acidic residues. Acidic residues predominate over residues 5174–5199 (QMEIPEDLELEDPDEGKEDDEQQDGG). Basic and acidic residues predominate over residues 5213–5224 (DVSKEEEKKKEL). Acidic residues-rich tracts occupy residues 5225–5255 (DGDEKEESDQDGDEEKEDEEKEDGDEDEDKE) and 5273–5286 (EGDEPEKEQPEEDQ). Over residues 5297 to 5313 (ETPKDSEQPLGVKDKTG) the composition is skewed to basic and acidic residues. The segment covering 5339–5349 (GMTQPTPSEND) has biased composition (polar residues). The segment covering 5410 to 5442 (SEPKEKAPKQDPNAKENENQDYEFIKDDEKLDK) has biased composition (basic and acidic residues). The span at 5448 to 5460 (QALAAATDTQLQD) shows a compositional bias: low complexity. Over residues 5469 to 5487 (DQAEQEEDQMDIDEEDDMD) the composition is skewed to acidic residues. Basic and acidic residues-rich tracts occupy residues 5488 to 5536 (VDHK…KDQQ) and 5551 to 5570 (QFTKEQLENLTNLDKEKAVL). Over residues 5571–5590 (DDGDDQEMEQDGDQDDEESV) the composition is skewed to acidic residues. The region spanning 5696–5889 (QVLLAIDDTE…NIPSILSDTL (194 aa)) is the VWFA domain.

The protein belongs to the midasin family. As to quaternary structure, associates with pre-60S ribosomes in the nucleoplasm.

It localises to the nucleus. The protein localises to the nucleolus. It is found in the nucleoplasm. In terms of biological role, nuclear chaperone required for maturation and nuclear export of pre-60S ribosome subunits. Functions at successive maturation steps to remove ribosomal factors at critical transition points, first driving the exit of early pre-60S particles from the nucleolus and then driving late pre-60S particles from the nucleus. In Dictyostelium discoideum (Social amoeba), this protein is Midasin (mdn1).